The primary structure comprises 30 residues: U10-ctenitoxin-Co1b (30 aa).

2 cysteine pairs are disulfide-bonded: Cys-2–Cys-17 and Cys-9–Cys-22.

As to expression, expressed by the venom gland.

The protein resides in the secreted. Its function is as follows. Antagonist of L-type calcium channels (Cav1/CACNA1). The protein is U10-ctenitoxin-Co1b of Ctenus ornatus (Brazilian spider).